A 196-amino-acid polypeptide reads, in one-letter code: ECF RNA polymerase sigma factor SigK (196 aa).

The segment at 39 to 105 (YDQTRARVYG…RAVDRVRSEQ (67 aa)) is sigma-70 factor domain-2. The Polymerase core binding signature appears at 62–65 (ETTQ). A sigma-70 factor domain-4 region spans residues 142-191 (CLDSLTDVQRECIQLAYYDGLTYAQVADRLAANLATIKSRMRDGIRALRK). Positions 164–183 (YAQVADRLAANLATIKSRMR) form a DNA-binding region, H-T-H motif.

This sequence belongs to the sigma-70 factor family. ECF subfamily. In terms of assembly, interacts transiently with the RNA polymerase catalytic core formed by RpoA, RpoB, RpoC and RpoZ (2 alpha, 1 beta, 1 beta' and 1 omega subunit) to form the RNA polymerase holoenzyme that can initiate transcription. Interacts (via sigma-70 factor domain 4) with anti-sigma-K factor RskA.

Sigma factors are initiation factors that promote the attachment of RNA polymerase to specific initiation sites and are then released. Extracytoplasmic function (ECF) sigma factors are held in an inactive form by an anti-sigma factor until released by regulated intramembrane proteolysis. The polypeptide is ECF RNA polymerase sigma factor SigK (sigK) (Mycolicibacterium vanbaalenii (strain DSM 7251 / JCM 13017 / BCRC 16820 / KCTC 9966 / NRRL B-24157 / PYR-1) (Mycobacterium vanbaalenii)).